We begin with the raw amino-acid sequence, 185 residues long: Sarcoplasmic calcium-binding proteins II, V, VI, and VII (185 aa).

4 EF-hand domains span residues phenylalanine 5 to valine 41, serine 57 to threonine 92, tryptophan 102 to glutamine 137, and cysteine 138 to alanine 173. Residues aspartate 19, asparagine 21, aspartate 23, serine 25, aspartate 30, aspartate 70, asparagine 72, aspartate 74, glutamate 81, aspartate 115, serine 117, aspartate 119, and glutamate 126 each contribute to the Ca(2+) site.

Like parvalbumins, SCPs seem to be more abundant in fast contracting muscles, but no functional relationship can be established from this distribution. The chain is Sarcoplasmic calcium-binding proteins II, V, VI, and VII from Branchiostoma lanceolatum (Common lancelet).